A 700-amino-acid chain; its full sequence is Transketolase (700 aa).

T2 bears the N-acetylthreonine mark. Residue H45 coordinates substrate. Thiamine diphosphate is bound by residues T48, H85, 133 to 135 (GPL), and L135. D177 contributes to the Mg(2+) binding site. G178 and N207 together coordinate thiamine diphosphate. Mg(2+)-binding residues include N207 and I209. Residues H283, R378, and S405 each coordinate substrate. Residue H283 participates in thiamine diphosphate binding. E441 acts as the Proton donor in catalysis. Thiamine diphosphate is bound at residue F467. H491, D499, and R552 together coordinate substrate.

This sequence belongs to the transketolase family. As to quaternary structure, homodimer. The cofactor is Mg(2+). Ca(2+) is required as a cofactor. It depends on Mn(2+) as a cofactor. Requires Co(2+) as cofactor. Thiamine diphosphate serves as cofactor.

It catalyses the reaction D-sedoheptulose 7-phosphate + D-glyceraldehyde 3-phosphate = aldehydo-D-ribose 5-phosphate + D-xylulose 5-phosphate. Catalyzes the reversible transfer of a two-carbon ketol group from sedoheptulose-7-phosphate to glyceraldehyde-3-phosphate, producing xylulose-5-phosphate and ribose-5-phosphate. Catalyzes the transfer of a two-carbon ketol group from a ketose donor to an aldose acceptor, via a covalent intermediate with the cofactor thiamine pyrophosphate. This chain is Transketolase (tkt), found in Mycobacterium tuberculosis (strain ATCC 25618 / H37Rv).